The primary structure comprises 85 residues: Electron transfer flavoprotein regulatory factor 1 homolog (85 aa).

This sequence belongs to the complex I LYR family. Highly expressed in the larval fat body.

It is found in the mitochondrion. Functionally, acts as a regulator of the electron transfer flavoprotein by promoting the removal of flavin from the ETF holoenzyme. May act with the ETF complex to coordinate lipid homeostasis in the fat body in response to stage-specific demands. The sequence is that of Electron transfer flavoprotein regulatory factor 1 homolog from Drosophila melanogaster (Fruit fly).